The following is a 367-amino-acid chain: Septin-1 (367 aa).

One can recognise a Septin-type G domain in the interval 22-296 (KGFDFTLMVA…EGYRARCLQS (275 aa)). A G1 motif region spans residues 32–39 (GESGLGKS). GTP contacts are provided by residues 32–39 (GESGLGKS), Thr66, Gly92, and 171–179 (KADALMPKE). The G3 motif stretch occupies residues 89–92 (DTPG). Positions 170–173 (GKAD) are G4 motif. The residue at position 206 (Ser206) is a Phosphoserine. 2 residues coordinate GTP: Gly229 and Arg245. Ser248 is modified (phosphoserine; by AURKB). Position 251 is a phosphothreonine (Thr251). Phosphoserine; by AURKB occurs at positions 307 and 315.

This sequence belongs to the TRAFAC class TrmE-Era-EngA-EngB-Septin-like GTPase superfamily. Septin GTPase family. Septins polymerize into heterooligomeric protein complexes that form filaments, and can associate with cellular membranes, actin filaments and microtubules. GTPase activity is required for filament formation. Interacts with AURKB.

It is found in the cytoplasm. It localises to the cytoskeleton. The protein resides in the microtubule organizing center. The protein localises to the centrosome. Its subcellular location is the midbody. Functionally, filament-forming cytoskeletal GTPase. May play a role in cytokinesis (Potential). This chain is Septin-1, found in Bos taurus (Bovine).